A 160-amino-acid chain; its full sequence is 6,7-dimethyl-8-ribityllumazine synthase (160 aa).

5-amino-6-(D-ribitylamino)uracil contacts are provided by residues Phe23, 61–63 (SFE), and 85–87 (AVI). Residue 90–91 (DT) coordinates (2S)-2-hydroxy-3-oxobutyl phosphate. Catalysis depends on His93, which acts as the Proton donor. Phe118 contacts 5-amino-6-(D-ribitylamino)uracil. Arg132 serves as a coordination point for (2S)-2-hydroxy-3-oxobutyl phosphate.

This sequence belongs to the DMRL synthase family.

It carries out the reaction (2S)-2-hydroxy-3-oxobutyl phosphate + 5-amino-6-(D-ribitylamino)uracil = 6,7-dimethyl-8-(1-D-ribityl)lumazine + phosphate + 2 H2O + H(+). It functions in the pathway cofactor biosynthesis; riboflavin biosynthesis; riboflavin from 2-hydroxy-3-oxobutyl phosphate and 5-amino-6-(D-ribitylamino)uracil: step 1/2. Catalyzes the formation of 6,7-dimethyl-8-ribityllumazine by condensation of 5-amino-6-(D-ribitylamino)uracil with 3,4-dihydroxy-2-butanone 4-phosphate. This is the penultimate step in the biosynthesis of riboflavin. The protein is 6,7-dimethyl-8-ribityllumazine synthase of Parasynechococcus marenigrum (strain WH8102).